A 353-amino-acid polypeptide reads, in one-letter code: JmjC domain-containing protein E (353 aa).

Residues Y138–K348 form the JmjC domain.

The polypeptide is JmjC domain-containing protein E (jcdE) (Dictyostelium discoideum (Social amoeba)).